Consider the following 54-residue polypeptide: Ovomucoid (54 aa).

The Kazal-like domain maps to 4–54 (VDCSEYPKPVCSPEYMPLCGSDSKTYNNKCDFCSAVVESNGTLTLGHFGKC). Cystine bridges form between Cys-6/Cys-36, Cys-14/Cys-33, and Cys-22/Cys-54. Asn-43 is a glycosylation site (N-linked (GlcNAc...) asparagine).

It is found in the secreted. In Casuarius casuarius (Southern cassowary), this protein is Ovomucoid.